A 305-amino-acid polypeptide reads, in one-letter code: UDP-3-O-acyl-N-acetylglucosamine deacetylase (305 aa).

Zn(2+) is bound by residues histidine 79, histidine 238, and aspartate 242. Residue histidine 265 is the Proton donor of the active site.

It belongs to the LpxC family. The cofactor is Zn(2+).

The catalysed reaction is a UDP-3-O-[(3R)-3-hydroxyacyl]-N-acetyl-alpha-D-glucosamine + H2O = a UDP-3-O-[(3R)-3-hydroxyacyl]-alpha-D-glucosamine + acetate. Its pathway is glycolipid biosynthesis; lipid IV(A) biosynthesis; lipid IV(A) from (3R)-3-hydroxytetradecanoyl-[acyl-carrier-protein] and UDP-N-acetyl-alpha-D-glucosamine: step 2/6. In terms of biological role, catalyzes the hydrolysis of UDP-3-O-myristoyl-N-acetylglucosamine to form UDP-3-O-myristoylglucosamine and acetate, the committed step in lipid A biosynthesis. The sequence is that of UDP-3-O-acyl-N-acetylglucosamine deacetylase from Pasteurella multocida (strain Pm70).